A 431-amino-acid chain; its full sequence is Histidinol dehydrogenase (431 aa).

Tyrosine 127, glutamine 189, and asparagine 212 together coordinate NAD(+). Serine 237, glutamine 259, and histidine 262 together coordinate substrate. Zn(2+) is bound by residues glutamine 259 and histidine 262. Residues glutamate 326 and histidine 327 each act as proton acceptor in the active site. Residues histidine 327, aspartate 360, glutamate 414, and histidine 419 each coordinate substrate. Residue aspartate 360 coordinates Zn(2+). Residue histidine 419 participates in Zn(2+) binding.

Belongs to the histidinol dehydrogenase family. The cofactor is Zn(2+).

The enzyme catalyses L-histidinol + 2 NAD(+) + H2O = L-histidine + 2 NADH + 3 H(+). The protein operates within amino-acid biosynthesis; L-histidine biosynthesis; L-histidine from 5-phospho-alpha-D-ribose 1-diphosphate: step 9/9. Catalyzes the sequential NAD-dependent oxidations of L-histidinol to L-histidinaldehyde and then to L-histidine. The chain is Histidinol dehydrogenase from Xanthomonas oryzae pv. oryzae (strain KACC10331 / KXO85).